The sequence spans 1403 residues: DNA-directed RNA polymerase subunit beta' (1403 aa).

Residues cysteine 71, cysteine 73, cysteine 86, and cysteine 89 each contribute to the Zn(2+) site. Mg(2+) contacts are provided by aspartate 462, aspartate 464, and aspartate 466. Positions 811, 885, 892, and 895 each coordinate Zn(2+).

Belongs to the RNA polymerase beta' chain family. As to quaternary structure, the RNAP catalytic core consists of 2 alpha, 1 beta, 1 beta' and 1 omega subunit. When a sigma factor is associated with the core the holoenzyme is formed, which can initiate transcription. Mg(2+) serves as cofactor. Zn(2+) is required as a cofactor.

It catalyses the reaction RNA(n) + a ribonucleoside 5'-triphosphate = RNA(n+1) + diphosphate. In terms of biological role, DNA-dependent RNA polymerase catalyzes the transcription of DNA into RNA using the four ribonucleoside triphosphates as substrates. This Bartonella tribocorum (strain CIP 105476 / IBS 506) protein is DNA-directed RNA polymerase subunit beta'.